We begin with the raw amino-acid sequence, 461 residues long: Gustatory and pheromone receptor 32a (461 aa).

Residues 1–100 lie on the Cytoplasmic side of the membrane; that stretch reads MSPNTWVIEM…YSFFVRGVVH (100 aa). A helical transmembrane segment spans residues 101–121; sequence ALTIFNVYSLFTPISAQLFFS. Residues 122–127 are Extracellular-facing; sequence YRETDN. Residues 128–148 form a helical membrane-spanning segment; the sequence is VNQWIELLLCILTYTLTVFVC. Over 149 to 180 the chain is Cytoplasmic; sequence AHNTTSMLRIMNEILQLDEEVRRQFGANLSQN. Residues 181-201 traverse the membrane as a helical segment; the sequence is FGFLVKFLVGITACQAYIIVL. The Extracellular portion of the chain corresponds to 202–214; that stretch reads KIYAVQGEITPTS. The helical transmembrane segment at 215 to 235 threads the bilayer; the sequence is YILLAFYGIQNGLTATYIVFA. Residues 236-317 lie on the Cytoplasmic side of the membrane; that stretch reads SALLRIVYIR…YKGINDCCNL (82 aa). The helical transmembrane segment at 318 to 338 threads the bilayer; sequence ILVSFLGYSFYTVTTNCYNLF. Over 339–348 the chain is Extracellular; the sequence is VQITGKGMVS. The helical transmembrane segment at 349 to 369 threads the bilayer; sequence PNILQWCFAWLCLHVSLLALL. At 370-414 the chain is on the cytoplasmic side; it reads SRSCGLTTTEANATSQILARVYAKSKEYQNIIDKFLTKSIKQEVQ. Residues 415–435 traverse the membrane as a helical segment; the sequence is FTAYGFFAIDNSTLFKIFSAV. The Extracellular segment spans residues 436–461; it reads TTYLVILIQFKQLEDSKVEDPVPEQT.

The protein belongs to the insect chemoreceptor superfamily. Gustatory receptor (GR) family. Gr21a subfamily. Expressed in the adult labellar chemosensory neurons. Expressed in tarsal neurons for male-male courtship suppression. In larvae, is expressed in neurons of the terminal external chemosensory organ, and the dorsal and posterior external chemosensory organs.

It localises to the cell membrane. Gustatory receptor which mediates acceptance or avoidance behavior, depending on its substrates. Required for the response to N,N-Diethyl-meta-toluamide (DEET), the most widely used insect repellent worldwide. Functions as a pheromone receptor for a male inhibitory pheromone and promotes male-male aggression and suppresses male-male courtship. Also promotes preferentially virgin females courting over mated females. The polypeptide is Gustatory and pheromone receptor 32a (Gr32a) (Drosophila melanogaster (Fruit fly)).